Reading from the N-terminus, the 1489-residue chain is DNA-directed RNA polymerase subunit beta (1489 aa).

It belongs to the RNA polymerase beta chain family. The RNAP catalytic core consists of 2 alpha, 1 beta, 1 beta' and 1 omega subunit. When a sigma factor is associated with the core the holoenzyme is formed, which can initiate transcription.

It catalyses the reaction RNA(n) + a ribonucleoside 5'-triphosphate = RNA(n+1) + diphosphate. In terms of biological role, DNA-dependent RNA polymerase catalyzes the transcription of DNA into RNA using the four ribonucleoside triphosphates as substrates. This Koribacter versatilis (strain Ellin345) protein is DNA-directed RNA polymerase subunit beta.